A 131-amino-acid polypeptide reads, in one-letter code: Peptide methionine sulfoxide reductase MsrB (131 aa).

One can recognise a MsrB domain in the interval 8 to 130 (LDTWREELTD…NSLSLKLVPR (123 aa)). 4 residues coordinate Zn(2+): Cys47, Cys50, Cys96, and Cys99. Cys119 (nucleophile) is an active-site residue.

It belongs to the MsrB Met sulfoxide reductase family. Requires Zn(2+) as cofactor.

The enzyme catalyses L-methionyl-[protein] + [thioredoxin]-disulfide + H2O = L-methionyl-(R)-S-oxide-[protein] + [thioredoxin]-dithiol. The polypeptide is Peptide methionine sulfoxide reductase MsrB (Ectopseudomonas mendocina (strain ymp) (Pseudomonas mendocina)).